A 156-amino-acid chain; its full sequence is Endogenous retrovirus group K member 6 Pro protein (156 aa).

The Peptidase A2 domain maps to 21–96 (FEGLVDTGAD…IPLNLWGRDL (76 aa)). Residue aspartate 26 is part of the active site. The region spanning 111-156 (YSPTSQKIMTKMGYIPGKGLGKNEDGIKIPVEAKINQEREGIGNPC) is the G-patch domain.

Belongs to the peptidase A2 family. HERV class-II K(HML-2) subfamily. As to quaternary structure, active as a homodimer. Autoproteolytically processed at the N-terminus. Expected C-terminal autoprocessing not detected. The sequence shown is that of the processed Pro protein.

It carries out the reaction Processing at the authentic HIV-1 PR recognition site and release of the mature p17 matrix and the p24 capsid protein, as a result of the cleavage of the -SQNY-|-PIVQ- cleavage site.. Its function is as follows. Retroviral proteases have roles in the processing of the primary translation products and the maturation of the viral particle. Endogenous Pro proteins may have kept, lost or modified their original function during evolution. In Homo sapiens (Human), this protein is Endogenous retrovirus group K member 6 Pro protein (ERVK-6).